The chain runs to 363 residues: Uroporphyrinogen decarboxylase (363 aa).

Residues 36–40, Asp85, Tyr160, Ser215, and His339 contribute to the substrate site; that span reads RQAGR.

Belongs to the uroporphyrinogen decarboxylase family. In terms of assembly, homodimer.

Its subcellular location is the cytoplasm. The enzyme catalyses uroporphyrinogen III + 4 H(+) = coproporphyrinogen III + 4 CO2. It functions in the pathway porphyrin-containing compound metabolism; protoporphyrin-IX biosynthesis; coproporphyrinogen-III from 5-aminolevulinate: step 4/4. Functionally, catalyzes the decarboxylation of four acetate groups of uroporphyrinogen-III to yield coproporphyrinogen-III. This chain is Uroporphyrinogen decarboxylase, found in Saccharopolyspora erythraea (strain ATCC 11635 / DSM 40517 / JCM 4748 / NBRC 13426 / NCIMB 8594 / NRRL 2338).